Reading from the N-terminus, the 144-residue chain is D-aminoacyl-tRNA deacylase (144 aa).

The short motif at 136–137 (GP) is the Gly-cisPro motif, important for rejection of L-amino acids element.

It belongs to the DTD family. In terms of assembly, homodimer.

It is found in the cytoplasm. The catalysed reaction is glycyl-tRNA(Ala) + H2O = tRNA(Ala) + glycine + H(+). The enzyme catalyses a D-aminoacyl-tRNA + H2O = a tRNA + a D-alpha-amino acid + H(+). In terms of biological role, an aminoacyl-tRNA editing enzyme that deacylates mischarged D-aminoacyl-tRNAs. Also deacylates mischarged glycyl-tRNA(Ala), protecting cells against glycine mischarging by AlaRS. Acts via tRNA-based rather than protein-based catalysis; rejects L-amino acids rather than detecting D-amino acids in the active site. By recycling D-aminoacyl-tRNA to D-amino acids and free tRNA molecules, this enzyme counteracts the toxicity associated with the formation of D-aminoacyl-tRNA entities in vivo and helps enforce protein L-homochirality. This chain is D-aminoacyl-tRNA deacylase, found in Vibrio atlanticus (strain LGP32) (Vibrio splendidus (strain Mel32)).